Consider the following 190-residue polypeptide: Translation machinery-associated protein 22 (190 aa).

A disordered region spans residues 63-83; it reads LNVSGTKDSNAEEQPAKLTKE. One can recognise an SUI1 domain in the interval 99 to 170; sequence VLIKTIERTK…DIFDFILEKF (72 aa).

Belongs to the DENR family. As to quaternary structure, interacts with the 40S ribosomal subunit.

It localises to the cytoplasm. The protein is Translation machinery-associated protein 22 (tma22) of Schizosaccharomyces pombe (strain 972 / ATCC 24843) (Fission yeast).